A 92-amino-acid polypeptide reads, in one-letter code: Small nuclear ribonucleoprotein E (92 aa).

The Sm domain occupies 18–92 (INLIFRYLQN…NITLLQSVSN (75 aa)).

The protein belongs to the snRNP Sm proteins family. As to quaternary structure, core component of the spliceosomal U1, U2, U4 and U5 small nuclear ribonucleoproteins (snRNPs), the building blocks of the spliceosome. Most spliceosomal snRNPs contain a common set of Sm proteins, snrpb, snrpd1, snrpd2, snrpd3, snrpe, snrpf and snrpg that assemble in a heptameric protein ring on the Sm site of the small nuclear RNA to form the core snRNP. Component of the U1 snRNP. The U1 snRNP is composed of the U1 snRNA and the 7 core Sm proteins snrpb, snrpd1, snrpd2, snrpd3, snrpe, snrpf and snrpg, and at least three U1 snRNP-specific proteins snrnp70/u1-70k, snrpa/u1-a and snrpc/u1-c. Component of the U4/U6-U5 tri-snRNP complex composed of the U4, U6 and U5 snRNAs and at least prpf3, prpf4, prpf6, prpf8, prpf31, snrnp200, txnl4a, snrnp40, snrpb, snrpd1, snrpd2, snrpd3, snrpe, snrpf, snrpg, ddx23, cd2bp2, ppih, snu13, eftud2, sart1 and usp39, plus lsm2, lsm3, lsm4, lsm5, lsm6, lsm7 and lsm8. Component of the U7 snRNP complex, or U7 Sm protein core complex, that is composed of the U7 snRNA and at least lsm10, lsm11, snrpb, snrpd3, snrpe, snrpf and snrpg; the complex does not contain snrpd1 and snrpd2. Component of the minor spliceosome, which splices U12-type introns. Part of the SMN-Sm complex that contains smn1, gemin2/sip1, ddx20/gemin3, gemin4, gemin5, gemin6, gemin7, gemin8, strap/unrip and the Sm proteins snrpb, snrpd1, snrpd2, snrpd3, snrpe, snrpf and snrpg; catalyzes core snRNPs assembly. Forms a 6S pICln-Sm complex composed of clns1a/pICln, snrpd1, snrpd2, snrpe, snrpf and snrpg; ring-like structure where clns1a/pICln mimics additional Sm proteins and which is unable to assemble into the core snRNP.

The protein resides in the cytoplasm. Its subcellular location is the cytosol. The protein localises to the nucleus. Its function is as follows. Plays a role in pre-mRNA splicing as a core component of the spliceosomal U1, U2, U4 and U5 small nuclear ribonucleoproteins (snRNPs), the building blocks of the spliceosome. Component of both the pre-catalytic spliceosome B complex and activated spliceosome C complexes. As a component of the minor spliceosome, involved in the splicing of U12-type introns in pre-mRNAs. As part of the U7 snRNP it is involved in histone 3'-end processing. The protein is Small nuclear ribonucleoprotein E (snrpe) of Danio rerio (Zebrafish).